The chain runs to 474 residues: PTS system MurNAc-GlcNAc-specific EIIBC component (474 aa).

The region spanning 5–87 (ERLAKDITHA…ADQSGATLAE (83 aa)) is the PTS EIIB type-1 domain. The Phosphocysteine intermediate; for EIIB activity role is filled by Cys27. The 351-residue stretch at 124–474 (KSIANIFIPL…GTTKEMRNPE (351 aa)) folds into the PTS EIIC type-1 domain. A run of 10 helical transmembrane segments spans residues 129 to 149 (IFIP…IAAI), 167 to 187 (IVTV…IFTG), 193 to 213 (VFGA…LTGI), 228 to 248 (LAAG…LSMV), 268 to 288 (ITLL…AGFV), 299 to 319 (IIGV…LPLV), 343 to 363 (LLPI…ALWV), 378 to 398 (ALPV…TLPL), 402 to 422 (FFTA…IGHI), and 444 to 464 (LGYI…TYFF).

It is found in the cell membrane. The enzyme catalyses N-acetyl-beta-D-muramate-(1-&gt;4)-N-acetyl-D-glucosamine(out) + N(pros)-phospho-L-histidyl-[protein] = 6-phospho-N-acetyl-beta-D-muramate-(1-&gt;4)-N-acetyl-D-glucosamine(in) + L-histidyl-[protein]. The protein operates within cell wall biogenesis; peptidoglycan recycling. In terms of biological role, the phosphoenolpyruvate-dependent sugar phosphotransferase system (sugar PTS), a major carbohydrate active transport system, catalyzes the phosphorylation of incoming sugar substrates concomitantly with their translocation across the cell membrane. This system is involved in the uptake and phosphorylation of MurNAc-GlcNAc, the principle peptidoglycan turnover product of S.aureus, yielding cytoplasmic MurNAc 6P-GlcNAc. This chain is PTS system MurNAc-GlcNAc-specific EIIBC component, found in Staphylococcus epidermidis (strain ATCC 35984 / DSM 28319 / BCRC 17069 / CCUG 31568 / BM 3577 / RP62A).